A 367-amino-acid polypeptide reads, in one-letter code: Alanine racemase (367 aa).

Lys-34 acts as the Proton acceptor; specific for D-alanine in catalysis. At Lys-34 the chain carries N6-(pyridoxal phosphate)lysine. Substrate is bound at residue Arg-131. Tyr-258 (proton acceptor; specific for L-alanine) is an active-site residue. Residue Met-306 participates in substrate binding.

Belongs to the alanine racemase family. Requires pyridoxal 5'-phosphate as cofactor.

The catalysed reaction is L-alanine = D-alanine. It functions in the pathway amino-acid biosynthesis; D-alanine biosynthesis; D-alanine from L-alanine: step 1/1. In terms of biological role, catalyzes the interconversion of L-alanine and D-alanine. May also act on other amino acids. The sequence is that of Alanine racemase (alr) from Corynebacterium efficiens (strain DSM 44549 / YS-314 / AJ 12310 / JCM 11189 / NBRC 100395).